The chain runs to 348 residues: tRNA pseudouridine synthase D (348 aa).

Asp84 acts as the Nucleophile in catalysis. The region spanning 162-308 is the TRUD domain; the sequence is GVPNYFGPQR…ARMDRRPLCL (147 aa).

Belongs to the pseudouridine synthase TruD family.

It catalyses the reaction uridine(13) in tRNA = pseudouridine(13) in tRNA. Its function is as follows. Responsible for synthesis of pseudouridine from uracil-13 in transfer RNAs. The protein is tRNA pseudouridine synthase D of Chromohalobacter salexigens (strain ATCC BAA-138 / DSM 3043 / CIP 106854 / NCIMB 13768 / 1H11).